Reading from the N-terminus, the 303-residue chain is Recombination-associated protein RdgC (303 aa).

The protein belongs to the RdgC family.

The protein localises to the cytoplasm. The protein resides in the nucleoid. In terms of biological role, may be involved in recombination. The sequence is that of Recombination-associated protein RdgC from Serratia proteamaculans (strain 568).